A 60-amino-acid chain; its full sequence is Large ribosomal subunit protein uL30 (60 aa).

This sequence belongs to the universal ribosomal protein uL30 family. Part of the 50S ribosomal subunit.

This is Large ribosomal subunit protein uL30 from Shewanella sp. (strain MR-7).